The sequence spans 212 residues: Methylthioribulose-1-phosphate dehydratase (212 aa).

2 residues coordinate Zn(2+): H97 and H99.

This sequence belongs to the aldolase class II family. MtnB subfamily. In terms of assembly, homotetramer. Zn(2+) serves as cofactor.

The catalysed reaction is 5-(methylsulfanyl)-D-ribulose 1-phosphate = 5-methylsulfanyl-2,3-dioxopentyl phosphate + H2O. The protein operates within amino-acid biosynthesis; L-methionine biosynthesis via salvage pathway; L-methionine from S-methyl-5-thio-alpha-D-ribose 1-phosphate: step 2/6. Functionally, catalyzes the dehydration of methylthioribulose-1-phosphate (MTRu-1-P) into 2,3-diketo-5-methylthiopentyl-1-phosphate (DK-MTP-1-P). The protein is Methylthioribulose-1-phosphate dehydratase of Bacillus cereus (strain B4264).